A 318-amino-acid chain; its full sequence is Gamma-glutamyl hydrolase (318 aa).

The signal sequence occupies residues 1–24 (MASPGCLLCVLGLLLCGAASLELS). Residues 25 to 318 (RPHGDTAKKP…SSFQQCYIFD (294 aa)) enclose the Gamma-glutamyl hydrolase domain. N-linked (GlcNAc...) asparagine glycosylation occurs at Asn-116. Cys-134 (nucleophile) is an active-site residue. N-linked (GlcNAc...) asparagine glycans are attached at residues Asn-163 and Asn-203. His-244 (proton donor) is an active-site residue. N-linked (GlcNAc...) asparagine; partial glycosylation is present at Asn-307.

This sequence belongs to the peptidase C26 family. Homodimer.

The protein localises to the secreted. It is found in the extracellular space. Its subcellular location is the lysosome. It localises to the melanosome. The catalysed reaction is (6S)-5,6,7,8-tetrahydrofolyl-(gamma-L-Glu)(n) + (n-1) H2O = (6S)-5,6,7,8-tetrahydrofolate + (n-1) L-glutamate. Its function is as follows. Hydrolyzes the polyglutamate sidechains of pteroylpolyglutamates. Progressively removes gamma-glutamyl residues from pteroylpoly-gamma-glutamate to yield pteroyl-alpha-glutamate (folic acid) and free glutamate. May play an important role in the bioavailability of dietary pteroylpolyglutamates and in the metabolism of pteroylpolyglutamates and antifolates. The chain is Gamma-glutamyl hydrolase from Homo sapiens (Human).